Consider the following 147-residue polypeptide: Large ribosomal subunit protein uL15 (147 aa).

The span at 1 to 15 (MKLHELKPAKGAVKE) shows a compositional bias: basic and acidic residues. A disordered region spans residues 1–47 (MKLHELKPAKGAVKEVKRKGRGRATGNGKTAGRGHNGQNSRSGGGVR). The span at 23-35 (RATGNGKTAGRGH) shows a compositional bias: gly residues.

It belongs to the universal ribosomal protein uL15 family. Part of the 50S ribosomal subunit.

In terms of biological role, binds to the 23S rRNA. The chain is Large ribosomal subunit protein uL15 from Alkaliphilus metalliredigens (strain QYMF).